We begin with the raw amino-acid sequence, 69 residues long: Small ribosomal subunit protein uS14 (69 aa).

Residues Cys-33, Cys-36, Cys-51, and Cys-54 each coordinate Zn(2+).

The protein belongs to the universal ribosomal protein uS14 family. Zinc-binding uS14 subfamily. As to quaternary structure, part of the 30S ribosomal subunit. Zn(2+) is required as a cofactor.

Binds 16S rRNA, required for the assembly of 30S particles. The sequence is that of Small ribosomal subunit protein uS14 from Nanoarchaeum equitans (strain Kin4-M).